The primary structure comprises 131 residues: Small ribosomal subunit protein uS11 (131 aa).

This sequence belongs to the universal ribosomal protein uS11 family. In terms of assembly, part of the 30S ribosomal subunit. Interacts with proteins S7 and S18. Binds to IF-3.

Its function is as follows. Located on the platform of the 30S subunit, it bridges several disparate RNA helices of the 16S rRNA. Forms part of the Shine-Dalgarno cleft in the 70S ribosome. The protein is Small ribosomal subunit protein uS11 of Buchnera aphidicola subsp. Acyrthosiphon pisum (strain 5A).